The chain runs to 476 residues: Aspartyl/glutamyl-tRNA(Asn/Gln) amidotransferase subunit B (476 aa).

This sequence belongs to the GatB/GatE family. GatB subfamily. Heterotrimer of A, B and C subunits.

The catalysed reaction is L-glutamyl-tRNA(Gln) + L-glutamine + ATP + H2O = L-glutaminyl-tRNA(Gln) + L-glutamate + ADP + phosphate + H(+). The enzyme catalyses L-aspartyl-tRNA(Asn) + L-glutamine + ATP + H2O = L-asparaginyl-tRNA(Asn) + L-glutamate + ADP + phosphate + 2 H(+). Functionally, allows the formation of correctly charged Asn-tRNA(Asn) or Gln-tRNA(Gln) through the transamidation of misacylated Asp-tRNA(Asn) or Glu-tRNA(Gln) in organisms which lack either or both of asparaginyl-tRNA or glutaminyl-tRNA synthetases. The reaction takes place in the presence of glutamine and ATP through an activated phospho-Asp-tRNA(Asn) or phospho-Glu-tRNA(Gln). The protein is Aspartyl/glutamyl-tRNA(Asn/Gln) amidotransferase subunit B of Nitratidesulfovibrio vulgaris (strain ATCC 29579 / DSM 644 / CCUG 34227 / NCIMB 8303 / VKM B-1760 / Hildenborough) (Desulfovibrio vulgaris).